The chain runs to 477 residues: TNF receptor-associated factor family protein DDB_G0278133 (477 aa).

An RING-type; degenerate zinc finger spans residues 45–88; that stretch reads CDICTLELFIESEPKALQCKEGHLACRRCWERYLSTNKQCMTCK. 2 TRAF-type zinc fingers span residues 160-211 and 212-267; these read NHYK…SSLS and DHHK…SKMQ. Residues 271-326 are a coiled coil; it reads LEHSVTKLMNQNEIIKKDNQNLDQEKKIEEIKLKLNNLLNNYIQLKNEIAVLKQNS. One can recognise an MATH domain in the interval 331-463; that stretch reads VYSNKWIIPE…FLNEKGELEI (133 aa).

This sequence belongs to the TNF receptor-associated factor family. A subfamily.

It is found in the cytoplasm. Functionally, probable adapter protein and signal transducer that links members of the tumor necrosis factor receptor family to different signaling pathways by association with the receptor cytoplasmic domain and kinases. In Dictyostelium discoideum (Social amoeba), this protein is TNF receptor-associated factor family protein DDB_G0278133.